A 555-amino-acid polypeptide reads, in one-letter code: 2-isopropylmalate synthase (555 aa).

The 274-residue stretch at 30 to 303 (PIWCSVDLRD…DPGLDCTDIN (274 aa)) folds into the Pyruvate carboxyltransferase domain. The Mg(2+) site is built by Asp-39, His-242, His-244, and Asn-278. The segment at 437–555 (QPDARIKFVD…VSAANRVIAK (119 aa)) is regulatory domain.

Belongs to the alpha-IPM synthase/homocitrate synthase family. LeuA type 2 subfamily. In terms of assembly, homodimer. Requires Mg(2+) as cofactor.

The protein resides in the cytoplasm. The enzyme catalyses 3-methyl-2-oxobutanoate + acetyl-CoA + H2O = (2S)-2-isopropylmalate + CoA + H(+). The protein operates within amino-acid biosynthesis; L-leucine biosynthesis; L-leucine from 3-methyl-2-oxobutanoate: step 1/4. Its function is as follows. Catalyzes the condensation of the acetyl group of acetyl-CoA with 3-methyl-2-oxobutanoate (2-ketoisovalerate) to form 3-carboxy-3-hydroxy-4-methylpentanoate (2-isopropylmalate). The sequence is that of 2-isopropylmalate synthase from Brucella melitensis biotype 1 (strain ATCC 23456 / CCUG 17765 / NCTC 10094 / 16M).